We begin with the raw amino-acid sequence, 241 residues long: Uridylate kinase (241 aa).

ATP is bound at residue 15 to 18 (KISG). The segment at 23–28 (GDQGFG) is involved in allosteric activation by GTP. Gly57 is a binding site for UMP. Positions 58 and 62 each coordinate ATP. Residues Asp77 and 138 to 145 (TGNPYFTT) contribute to the UMP site. Positions 165, 171, and 174 each coordinate ATP.

The protein belongs to the UMP kinase family. In terms of assembly, homohexamer.

It is found in the cytoplasm. The catalysed reaction is UMP + ATP = UDP + ADP. The protein operates within pyrimidine metabolism; CTP biosynthesis via de novo pathway; UDP from UMP (UMPK route): step 1/1. Allosterically activated by GTP. Inhibited by UTP. In terms of biological role, catalyzes the reversible phosphorylation of UMP to UDP. This chain is Uridylate kinase, found in Paracoccus zeaxanthinifaciens.